We begin with the raw amino-acid sequence, 1006 residues long: E3 ubiquitin-protein ligase MIB1 (1006 aa).

Residues 6–74 enclose the MIB/HERC2 1 domain; it reads NNRVMVEGVG…AYDLRILDSA (69 aa). The segment at 80–132 adopts a ZZ-type zinc-finger fold; that stretch reads HDGTMCDTCRQQPIIGIRWKCAECTNYDLCTVCYHGDKHHLRHRFYRITTPGS. The Zn(2+) site is built by Cys85, Cys88, Cys100, Cys103, Cys109, Cys112, His118, and His122. One can recognise an MIB/HERC2 2 domain in the interval 143–221; it reads SKKITARGIF…MSDLKCVQDA (79 aa). Ser408 is modified (phosphoserine). ANK repeat units follow at residues 430-460, 463-492, 496-525, 529-558, 562-591, 595-627, 631-661, 665-694, and 698-729; these read DLNEELVKAAANGDVAKVEDLLKRPDVDVNG, AGHTAMQAASQNGHVDILKLLLKQNVDVEA, DGDRAVHHAAFGDEGAVIEVLHRGSADLNA, RRQTPLHIAVNKGHLQVVKTLLDFGCHPSL, EGDTPLHDAISKKRDDILAVLLEAGADVTI, NGFNALHHAALRGNPSAMRVLLSKLPRPWIVDE, DGYTALHLAALNNHVEVAELLVHQGNANLDI, NQQTALHLAVERQHTQIVRLLVRAGAKLDI, and DGDTPLHEALRHHTLSQLRQLQDMQDVGKVDA. 2 RING-type zinc fingers span residues 819-854 and 866-901; these read CMVCSDMKRDTLFGPCGHIATCSLCSPRVKKCLICK and CVVCSDKKAAVLFQPCGHMCACENCASLMKKCVQCR. The stretch at 935–962 forms a coiled coil; sequence QKDKDNTNVNADVQKLQQQLQDIKEQTM. Residues 963 to 996 form an RING-type 3 zinc finger; it reads CPVCLDRLKNMIFLCGHGTCQLCGDRMSECPICR.

Interacts with CEP131 and PCM1. Post-translationally, ubiquitinated; this modification is inhibited in response to cellular stress, such as ultraviolet light (UV) radiation or heat shock. Ubiquitinated; possibly via autoubiquitination. In terms of tissue distribution, detected in all tissues tested. Present in embryo, embryonic stem cells, bladder, skeletal muscle, bladder, uterus, testis, stomach, colon, ileum, trachea, lung, aorta, kidney, spleen, liver and vas deferens (at protein level). Highly expressed in testis.

It is found in the cytoplasm. The protein resides in the cytoskeleton. The protein localises to the microtubule organizing center. Its subcellular location is the centrosome. It localises to the centriolar satellite. It is found in the cell membrane. It catalyses the reaction S-ubiquitinyl-[E2 ubiquitin-conjugating enzyme]-L-cysteine + [acceptor protein]-L-lysine = [E2 ubiquitin-conjugating enzyme]-L-cysteine + N(6)-ubiquitinyl-[acceptor protein]-L-lysine.. Its pathway is protein modification; protein ubiquitination. In terms of biological role, E3 ubiquitin-protein ligase that mediates ubiquitination of Delta receptors, which act as ligands of Notch proteins. Positively regulates the Delta-mediated Notch signaling by ubiquitinating the intracellular domain of Delta, leading to endocytosis of Delta receptors. Involved in ubiquitination of centriolar satellite CEP131, CEP290 and PCM1 proteins and hence inhibits primary cilium formation in proliferating cells. Mediates 'Lys-63'-linked polyubiquitination of TBK1, which probably participates in kinase activation. Probably mediates ubiquitination and subsequent proteasomal degradation of DAPK1, thereby antagonizing anti-apoptotic effects of DAPK1 to promote TNF-induced apoptosis. The polypeptide is E3 ubiquitin-protein ligase MIB1 (Mib1) (Mus musculus (Mouse)).